We begin with the raw amino-acid sequence, 428 residues long: GTPase Obg (428 aa).

An Obg domain is found at 1-158 (MFVDQVQVEV…RFIKLELKVL (158 aa)). One can recognise an OBG-type G domain in the interval 159-333 (ADVGLVGFPS…LMHKTAEVLK (175 aa)). GTP-binding positions include 165-172 (GFPSVGKS), 190-194 (FTTLV), 212-215 (DLPG), 282-285 (TKMD), and 314-316 (SSL). Residues S172 and T192 each contribute to the Mg(2+) site. An OCT domain is found at 350 to 428 (YKYQPEPALK…IDDFTFEFVE (79 aa)).

This sequence belongs to the TRAFAC class OBG-HflX-like GTPase superfamily. OBG GTPase family. In terms of assembly, monomer. It depends on Mg(2+) as a cofactor.

It localises to the cytoplasm. In terms of biological role, an essential GTPase which binds GTP, GDP and possibly (p)ppGpp with moderate affinity, with high nucleotide exchange rates and a fairly low GTP hydrolysis rate. Plays a role in control of the cell cycle, stress response, ribosome biogenesis and in those bacteria that undergo differentiation, in morphogenesis control. This Lacticaseibacillus paracasei (strain ATCC 334 / BCRC 17002 / CCUG 31169 / CIP 107868 / KCTC 3260 / NRRL B-441) (Lactobacillus paracasei) protein is GTPase Obg.